A 346-amino-acid chain; its full sequence is Protein RecA (346 aa).

Residue 67–74 participates in ATP binding; the sequence is GPESSGKT.

Belongs to the RecA family.

The protein localises to the cytoplasm. Its function is as follows. Can catalyze the hydrolysis of ATP in the presence of single-stranded DNA, the ATP-dependent uptake of single-stranded DNA by duplex DNA, and the ATP-dependent hybridization of homologous single-stranded DNAs. It interacts with LexA causing its activation and leading to its autocatalytic cleavage. The protein is Protein RecA of Mycobacteroides abscessus (strain ATCC 19977 / DSM 44196 / CCUG 20993 / CIP 104536 / JCM 13569 / NCTC 13031 / TMC 1543 / L948) (Mycobacterium abscessus).